The following is a 164-amino-acid chain: Small ribosomal subunit protein uS5 (164 aa).

Residues 10 to 73 (LEERVVAINR…EAAKKNMIEV (64 aa)) enclose the S5 DRBM domain.

The protein belongs to the universal ribosomal protein uS5 family. Part of the 30S ribosomal subunit. Contacts proteins S4 and S8.

In terms of biological role, with S4 and S12 plays an important role in translational accuracy. Functionally, located at the back of the 30S subunit body where it stabilizes the conformation of the head with respect to the body. The sequence is that of Small ribosomal subunit protein uS5 from Streptococcus pyogenes serotype M1.